We begin with the raw amino-acid sequence, 506 residues long: tRNA-2-methylthio-N(6)-dimethylallyladenosine synthase (506 aa).

An MTTase N-terminal domain is found at 14 to 132; the sequence is KSYEVRTYGC…LPVLLERARV (119 aa). [4Fe-4S] cluster is bound by residues Cys-23, Cys-61, Cys-95, Cys-169, Cys-173, and Cys-176. The Radical SAM core domain occupies 155 to 386; the sequence is RESAYAAWVS…ALQEQISWDE (232 aa). In terms of domain architecture, TRAM spans 388 to 456; that stretch reads KKQVGRTLDV…PHHLLAEGTP (69 aa).

Belongs to the methylthiotransferase family. MiaB subfamily. As to quaternary structure, monomer. [4Fe-4S] cluster is required as a cofactor.

The protein localises to the cytoplasm. The catalysed reaction is N(6)-dimethylallyladenosine(37) in tRNA + (sulfur carrier)-SH + AH2 + 2 S-adenosyl-L-methionine = 2-methylsulfanyl-N(6)-dimethylallyladenosine(37) in tRNA + (sulfur carrier)-H + 5'-deoxyadenosine + L-methionine + A + S-adenosyl-L-homocysteine + 2 H(+). Catalyzes the methylthiolation of N6-(dimethylallyl)adenosine (i(6)A), leading to the formation of 2-methylthio-N6-(dimethylallyl)adenosine (ms(2)i(6)A) at position 37 in tRNAs that read codons beginning with uridine. The protein is tRNA-2-methylthio-N(6)-dimethylallyladenosine synthase of Streptomyces griseus subsp. griseus (strain JCM 4626 / CBS 651.72 / NBRC 13350 / KCC S-0626 / ISP 5235).